The primary structure comprises 259 residues: 5'-nucleotidase SurE (259 aa).

A divalent metal cation-binding residues include Asp-10, Asp-11, Ser-41, and Asn-96.

Belongs to the SurE nucleotidase family. It depends on a divalent metal cation as a cofactor.

It is found in the cytoplasm. It catalyses the reaction a ribonucleoside 5'-phosphate + H2O = a ribonucleoside + phosphate. In terms of biological role, nucleotidase that shows phosphatase activity on nucleoside 5'-monophosphates. The sequence is that of 5'-nucleotidase SurE from Wolinella succinogenes (strain ATCC 29543 / DSM 1740 / CCUG 13145 / JCM 31913 / LMG 7466 / NCTC 11488 / FDC 602W) (Vibrio succinogenes).